Reading from the N-terminus, the 248-residue chain is Probable transcriptional regulatory protein MYPE8020 (248 aa).

Belongs to the TACO1 family.

It localises to the cytoplasm. The sequence is that of Probable transcriptional regulatory protein MYPE8020 from Malacoplasma penetrans (strain HF-2) (Mycoplasma penetrans).